Here is a 257-residue protein sequence, read N- to C-terminus: tRNA (guanine-N(7)-)-methyltransferase (257 aa).

Over residues 1-12 (MARDSEDQDMET) the composition is skewed to acidic residues. The tract at residues 1–25 (MARDSEDQDMETETNGAAEGLDPTS) is disordered. S-adenosyl-L-methionine-binding positions include Gly-80, 103 to 104 (EI), 138 to 139 (NA), and Leu-158. Asp-161 is an active-site residue. 236 to 238 (SEE) serves as a coordination point for S-adenosyl-L-methionine.

Belongs to the class I-like SAM-binding methyltransferase superfamily. TrmB family.

It localises to the nucleus. The catalysed reaction is guanosine(46) in tRNA + S-adenosyl-L-methionine = N(7)-methylguanosine(46) in tRNA + S-adenosyl-L-homocysteine. Its pathway is tRNA modification; N(7)-methylguanine-tRNA biosynthesis. Catalyzes the formation of N(7)-methylguanine at position 46 (m7G46) in tRNA. In Drosophila ananassae (Fruit fly), this protein is tRNA (guanine-N(7)-)-methyltransferase.